The primary structure comprises 336 residues: MSKINLLLLCGGGSAEHDISLLSANYFETSLAKSEQFNVLRVVLDKFGQYQTAAGDDCELTNNREIRFRDETKPAWPVDYVIPCIHGYPGETGDIQSYFNLIQLPYFGCESEASSNCFNKITAKMWFSALGIPNTPYIFLNQYDDDAIAQTQAALENWGSIFVKAASQGSSVGCYKVDDSSKVADVLKDAFGYAPYVIVEKTIKARELEVAVYEYQGEVVATLPGEIICDSNTFYTFDEKYAKSSKARTDVVAQNVPTDISEQIRAYAIKAFKGMKLRHLSRIDFFLTQDNEILLNEINTFPGSTPISMFPKMLQNHGHDFTEYLSLVINGQLAAK.

The ATP-grasp domain maps to 124 to 330 (KMWFSALGIP…FTEYLSLVIN (207 aa)). 154-209 (ALENWGSIFVKAASQGSSVGCYKVDDSSKVADVLKDAFGYAPYVIVEKTIKARELE) serves as a coordination point for ATP. D284, E297, and N299 together coordinate Mg(2+).

The protein belongs to the D-alanine--D-alanine ligase family. Mg(2+) serves as cofactor. It depends on Mn(2+) as a cofactor.

The protein resides in the cytoplasm. It carries out the reaction 2 D-alanine + ATP = D-alanyl-D-alanine + ADP + phosphate + H(+). It participates in cell wall biogenesis; peptidoglycan biosynthesis. Functionally, cell wall formation. The sequence is that of D-alanine--D-alanine ligase from Shewanella sp. (strain ANA-3).